The primary structure comprises 504 residues: Maturase K (504 aa).

The protein belongs to the intron maturase 2 family. MatK subfamily.

Its subcellular location is the plastid. The protein localises to the chloroplast. In terms of biological role, usually encoded in the trnK tRNA gene intron. Probably assists in splicing its own and other chloroplast group II introns. This is Maturase K from Mentzelia laevicaulis (Blazing star).